The primary structure comprises 587 residues: Integrator complex subunit 14 (587 aa).

One can recognise a VWFA domain in the interval 3–113 (TLIALDASLS…NILQVVVFTD (111 aa)). 2 disordered regions span residues 190–211 (KSSD…KSEL) and 304–331 (REKS…DTSN).

The protein belongs to the Integrator subunit 14 family. As to quaternary structure, belongs to the multiprotein complex Integrator, at least composed of IntS1, IntS2, IntS3, IntS4, omd/IntS5, IntS6, defl/IntS7, IntS8, IntS9, IntS10, IntS11, IntS12, asun/IntS13, IntS14 and IntS15. The core complex associates with protein phosphatase 2A subunits mts/PP2A and Pp2A-29B, to form the Integrator-PP2A (INTAC) complex.

It localises to the nucleus. Component of the integrator complex, a multiprotein complex that terminates RNA polymerase II (Pol II) transcription in the promoter-proximal region of genes. The integrator complex provides a quality checkpoint during transcription elongation by driving premature transcription termination of transcripts that are unfavorably configured for transcriptional elongation: the complex terminates transcription by (1) catalyzing dephosphorylation of the C-terminal domain (CTD) of Pol II subunit Polr2A/Rbp1 and Spt5, and (2) degrading the exiting nascent RNA transcript via endonuclease activity. The integrator complex is also involved in the 3'-end processing of the U7 snRNA, and also the spliceosomal snRNAs U1, U2, U4 and U5. This Drosophila melanogaster (Fruit fly) protein is Integrator complex subunit 14.